The following is a 370-amino-acid chain: uncharacterized protein (370 aa).

A run of 10 helical transmembrane segments spans residues 6–26 (AVVFILAAFLLWGAADYCLGN), 49–69 (IGIVSLAPVLAAILIPIVAPF), 79–99 (SFANTILAIDMGGYALAGEMA), 111–131 (FLGTMMGPAIVFTIPVALGII), 143–163 (ILIGLCTVPIGCLIGGLCAGF), 167–187 (MIGKNLLIPSLLSAVIAFGLW), 206–226 (MVAIIGLAAVSVETMTGIVLI), 236–256 (IQTTGTIAIALAGAFPMTAFI), 307–327 (VAFAVSGAFVLGSHLGFVAGM), and 333–353 (AAMIIGKLAGGVTAAAAAAWM).

It belongs to the EutH family.

Its subcellular location is the cell membrane. This is an uncharacterized protein from Bacillus subtilis (strain 168).